Consider the following 127-residue polypeptide: Venom protein family 16 protein 1 (127 aa).

An N-terminal signal peptide occupies residues 1-18 (MWIWYSLLFFGVCHLAHS).

In terms of tissue distribution, expressed by the venom gland (anterior main gland) (at protein level).

It is found in the secreted. The sequence is that of Venom protein family 16 protein 1 from Platymeris rhadamanthus (Red spot assassin bug).